The following is an 874-amino-acid chain: MSVSSVVTKESFKKKDVNMNIQEKDINDFVQSASRVIAPLWPISTFAARHPWVGLEKQSFEQVADWLKEIRDVDIYPSASMIHSAKRRGEIDESFLYAGLHRWLDSQSFHIPREKVERYCQAALKLDKLPSHLLLSKELNTLAAEINNVNTESTEDFSMQPISSLIENQDSERLANILDYHVIKWCKLYLDNFQSSWAMPNREKGFYHAWHHLIKYDPALSKQQRKALKDWPQDANAALVRALSELKIPKSKIQTYLEGHLLSLPGWAGIILWRSKQSIREHALLTEYLAVRISMEWAIVNPYLSLVNHRLKKKVSIVPLLASWIHWGDLSIEEWSQMSATEQNELLSIAHHFDEKLRRKLWWEAWEQTHAERLSQEILSKQCVNNKKKFVLAQMAFCIDVRSEPFRRQLEKAGPFETIGIAGFFGLPIATSELGSHHSHPSLPVMQKPKHRIKELASEDELKSYQQRKKVDHSLSYTFKMMKQNVLTSLLLPELSGPFLGLQMIARSFVPRRLGSFIRNLRKTWLRKPDTRFSLDYAHDTESEIPIGFSKEEKVNYVRQTLKMMGLTENFAPLVVICGHSSQSTNNPYAAALECGACGGAAGGFNARIFATLCNLPEVREGLSAEGIKIPEDTVFAAAEHKTTVDELEWIYIPELSESAREALNHIEAIMPKVSHNANRERLAQLPNFKTKMKNPRAEAHRFAEDWSEIRPEWGLARNASFIIGQRELTQDCDLEGRAFLHNYDWKQDESGDILASIIAGPGTVAQWINLQYYASTVAPHYYGSGNKATQTVTAGLGVMQGNASDLLSGVPWQSVMQSDDEAYHSPLRLLIVIQAPSQYIERLLNNDFIFREKVQNGWVRLASVDPEVGWKNW.

Zn(2+) contacts are provided by Cys398, Asp400, His580, and Cys595.

This sequence belongs to the inorganic carbon transporter (TC 9.A.2) DabA family. Forms a complex with DabB. Zn(2+) is required as a cofactor.

The protein resides in the cell membrane. Part of an energy-coupled inorganic carbon pump. In Bacillus cytotoxicus (strain DSM 22905 / CIP 110041 / 391-98 / NVH 391-98), this protein is Probable inorganic carbon transporter subunit DabA.